The sequence spans 141 residues: Transcription antitermination protein NusB (141 aa).

This sequence belongs to the NusB family.

Its function is as follows. Involved in transcription antitermination. Required for transcription of ribosomal RNA (rRNA) genes. Binds specifically to the boxA antiterminator sequence of the ribosomal RNA (rrn) operons. In Desulfotalea psychrophila (strain LSv54 / DSM 12343), this protein is Transcription antitermination protein NusB.